The following is a 344-amino-acid chain: Ferrochelatase (344 aa).

The Fe cation site is built by His190 and Glu270.

It belongs to the ferrochelatase family.

It localises to the cytoplasm. The enzyme catalyses heme b + 2 H(+) = protoporphyrin IX + Fe(2+). Its pathway is porphyrin-containing compound metabolism; protoheme biosynthesis; protoheme from protoporphyrin-IX: step 1/1. Functionally, catalyzes the ferrous insertion into protoporphyrin IX. This Rickettsia felis (strain ATCC VR-1525 / URRWXCal2) (Rickettsia azadi) protein is Ferrochelatase.